Consider the following 167-residue polypeptide: Inclusion membrane protein G (167 aa).

2 helical membrane passes run 33 to 57 (VVLA…AVLF) and 63 to 88 (VLPY…LRSL). The interval 94–167 (SCKKRSPEEI…DNSRSRSRSF (74 aa)) is sufficient for interaction with human 14-3-3 beta protein. A disordered region spans residues 97 to 167 (KRSPEEIEGA…DNSRSRSRSF (71 aa)). The span at 122 to 135 (ESASPQASPTSSTL) shows a compositional bias: low complexity. Positions 161-166 (RSRSRS) match the Phosphorylation-dependent binding motif motif. A Phosphoserine modification is found at S166.

In terms of assembly, in infected HeLa cells colocalizes with host 14-3-3 protein (YWHAB); phosphorylation of Ser-166 is probably required. Interacts with Pkn1. In terms of processing, phosphorylated, possibly at more than one position, in infected HeLa cells. Phosphorylated by chlamydial kinase Pnk1.

It is found in the secreted. It localises to the host vacuole. The protein resides in the host pathogen-containing vacuole. The protein localises to the host pathogen-containing vacuole membrane. Inclusion membrane protein probably involved in early modification events of the chlamydial inclusion. This is Inclusion membrane protein G from Chlamydia trachomatis serovar L2 (strain ATCC VR-902B / DSM 19102 / 434/Bu).